A 408-amino-acid chain; its full sequence is MAGTFVSVLDISGDSVVTGPVPVEPFVPGSANLFPKMTSRINDTAWELWEFEGFSAGGEAAVGVSLYRDARGVDKGGFHAEVNAIWPDGRKWGQTLYFAESIVTAEGASPDEGRIHGFWRSNSNTAGGAPAAARSITFSISEDLGVATVCFSVPDQVTGTIELRSSGSNRKSCLPATEEAALLYPSVYYMFPMGPVDANADLTFSFSATAGGEIEEERKLSVQSRGGGHGGMVRGWSTEAWPQFMNDAYYVVAKVGSYMLQMLRVVGSAAAGHRPYAVARLYLNKELVCAANQAVDAQSAAEGSTATTQPRDMVAVEKVLSEPKSQEQVVSGAFSDKNIGYVIEFISGQQKRWRFDARHKRAWWSEPTSAPGPGCTGKSGWIEGFLGGSDGETFEGAGVGGQLQIPVP.

The protein belongs to the Diels-Alderase family.

It functions in the pathway mycotoxin biosynthesis. Its function is as follows. Diels-Alderase; part of the gene cluster that mediates the biosynthesis of pyrrolocin, a bright yellow trans-fused decalin-containing tetramic acid with antimicrobial activity. The PKS module of prlS together with the enoylreductase prlC catalyze the formation of the polyketide unit which is then conjugated to L-serine by the condensation domain of the prlS NRPS module. Diels-Alderase gNR600 is involved in endo-selective Diels-Alder cycloaddition to form the decalin ring. Subsequent methylation is carried leads to pyrrolocin A. The methyltransferase involved in that last step has not been identified yet and is probably located outside of the prl cluster. The sequence is that of Diels-Alderase gNR600 from Fungal sp. (strain NRRL 50135).